The sequence spans 630 residues: METTPLNSQKVLSECKDKEDCQENGVLQKGVPTPADKAGPGQISNGYSAVPSTSAGDEAPHSTPAATTTLVAEIHQGERETWGKKMDFLLSVIGYAVDLGNIWRFPYICYQNGGGAFLLPYTIMAIFGGIPLFYMELALGQYHRNGCISIWKKICPIFKGIGYAICIIAFYIASYYNTIIAWALYYLISSFTDQLPWTSCKNSWNTGNCTNYFAQDNITWTLHSTSPAEEFYLRHVLQIHQSKGLQDLGTISWQLALCIMLIFTIIYFSIWKGVKTSGKVVWVTATFPYIVLSVLLVRGATLPGAWRGVVFYLKPNWQKLLETGVWVDAAAQIFFSLGPGFGVLLAFASYNKFNNNCYQDALVTSVVNCMTSFVSGFVIFTVLGYMAEMRNEDVSEVAKDAGPSLLFITYAEAIANMPASTFFAIIFFLMLITLGLDSTFAGLEGVITAVLDEFPHIWAKRREWFVLIVVITCILGSLLTLTSGGAYVVTLLEEYATGPAVLTVALIEAVVVSWFYGITQFCSDVKEMLGFSPGWFWRICWVAISPLFLLFIICSFLMSPPQLRLFQYNYPHWSIILGYCIGTSSVICIPIYIIYRLISTPGTLKERIIKSITPETPTEIPCGDIRMNAV.

Polar residues-rich tracts occupy residues methionine 1–valine 11 and glutamine 42–alanine 55. Residues methionine 1 to threonine 63 are disordered. At methionine 1–aspartate 87 the chain is on the cytoplasmic side. Tyrosine 47 carries the phosphotyrosine modification. Residues phenylalanine 88 to asparagine 112 traverse the membrane as a helical segment. Positions 94, 96, 97, 98, and 101 each coordinate Na(+). Position 98 (aspartate 98) interacts with serotonin. Residues glycine 113–glycine 115 lie on the Extracellular side of the membrane. A helical membrane pass occupies residues alanine 116 to methionine 135. Residues glutamate 136–glycine 160 are Cytoplasmic-facing. Tyrosine 142 carries the post-translational modification Phosphotyrosine. Residues isoleucine 161 to tyrosine 186 form a helical membrane-spanning segment. The Extracellular portion of the chain corresponds to leucine 187–serine 252. The cysteines at positions 200 and 209 are disulfide-linked. 2 N-linked (GlcNAc...) asparagine glycosylation sites follow: asparagine 208 and asparagine 217. Residues tryptophan 253–tryptophan 271 traverse the membrane as a helical segment. Topologically, residues lysine 272–serine 277 are cytoplasmic. Threonine 276 is subject to Phosphothreonine. The helical transmembrane segment at glycine 278–valine 297 threads the bilayer. Over arginine 298 to glycine 324 the chain is Extracellular. Residues valine 325–phenylalanine 347 traverse the membrane as a helical segment. Serine 336 is a binding site for Na(+). At alanine 348–aspartate 360 the chain is on the cytoplasmic side. Residues alanine 361–phenylalanine 380 traverse the membrane as a helical segment. Asparagine 368 contributes to the Na(+) binding site. Residues threonine 381–threonine 421 are Extracellular-facing. A helical membrane pass occupies residues phenylalanine 422–leucine 443. Na(+)-binding residues include leucine 434, aspartate 437, and serine 438. Residue threonine 439 coordinates serotonin. Topologically, residues glutamate 444–glutamate 463 are cytoplasmic. Residues tryptophan 464–serine 483 traverse the membrane as a helical segment. Residues glycine 484–glutamate 494 lie on the Extracellular side of the membrane. Serotonin-binding residues include glutamate 494 and tyrosine 495. Residues tyrosine 495–tyrosine 516 form a helical membrane-spanning segment. Topologically, residues glycine 517–arginine 538 are cytoplasmic. Residues isoleucine 539–methionine 558 traverse the membrane as a helical segment. Phenylalanine 556 and serine 559 together coordinate serotonin. The Extracellular segment spans residues serine 559–serine 574. A helical membrane pass occupies residues isoleucine 575–tyrosine 595. At arginine 596–valine 630 the chain is on the cytoplasmic side. Positions threonine 616–aspartate 624 are interaction with RAB4A.

It belongs to the sodium:neurotransmitter symporter (SNF) (TC 2.A.22) family. SLC6A4 subfamily. Monomer or homooligomer. Interacts (via C-terminus) with SCAMP2; the interaction is direct and retains transporter molecules intracellularly. Interacts with filamentous actin and STX1A. Interacts (via the N-terminus) with STX1A (via the H3 domain); this interaction regulates SLC4A6 channel conductance. Interacts with SEC23A, SEC24C and PATJ. Interacts with NOS1; the interaction may diminish the cell surface localization of SERT in the brain and, correspondingly, reduce serotonin reuptake. Interacts with TGFB1I1. Interacts with ITGAV:ITGB3. Interacts (via C-terminus) with ITGB3; this interaction regulates SLC6A4 trafficking. In terms of processing, phosphorylation at Thr-276 increases 5-HT uptake and is required for cGMP-mediated SERT regulation. Expressed in the lung, midbrain and brainstem regions. Expressed in brainstem raphe neurons.

It localises to the cell membrane. It is found in the endomembrane system. The protein resides in the endosome membrane. The protein localises to the synapse. Its subcellular location is the cell junction. It localises to the focal adhesion. It is found in the cell projection. The protein resides in the neuron projection. The catalysed reaction is serotonin(out) + K(+)(in) + Na(+)(out) + H(+)(in) = serotonin(in) + K(+)(out) + Na(+)(in) + H(+)(out). In terms of biological role, serotonin transporter that cotransports serotonin with one Na(+) ion in exchange for one K(+) ion and possibly one proton in an overall electroneutral transport cycle. Transports serotonin across the plasma membrane from the extracellular compartment to the cytosol thus limiting serotonin intercellular signaling. Essential for serotonin homeostasis in the central nervous system. In the developing somatosensory cortex, acts in glutamatergic neurons to control serotonin uptake and its trophic functions accounting for proper spatial organization of cortical neurons and elaboration of sensory circuits. In the mature cortex, acts primarily in brainstem raphe neurons to mediate serotonin uptake from the synaptic cleft back into the pre-synaptic terminal thus terminating serotonin signaling at the synapse. Modulates mucosal serotonin levels in the gastrointestinal tract through uptake and clearance of serotonin in enterocytes. Required for enteric neurogenesis and gastrointestinal reflexes. Regulates blood serotonin levels by ensuring rapid high affinity uptake of serotonin from plasma to platelets, where it is further stored in dense granules via vesicular monoamine transporters and then released upon stimulation. Mechanistically, the transport cycle starts with an outward-open conformation having Na1(+) and Cl(-) sites occupied. The binding of a second extracellular Na2(+) ion and serotonin substrate leads to structural changes to outward-occluded to inward-occluded to inward-open, where the Na2(+) ion and serotonin are released into the cytosol. Binding of intracellular K(+) ion induces conformational transitions to inward-occluded to outward-open and completes the cycle by releasing K(+) possibly together with a proton bound to Asp-98 into the extracellular compartment. Na1(+) and Cl(-) ions remain bound throughout the transport cycle. Additionally, displays serotonin-induced channel-like conductance for monovalent cations, mainly Na(+) ions. The channel activity is uncoupled from the transport cycle and may contribute to the membrane resting potential or excitability. The chain is Sodium-dependent serotonin transporter from Mus musculus (Mouse).